The sequence spans 39 residues: SPbeta prophage-derived membrane protein YosA (39 aa).

Residues 19–39 traverse the membrane as a helical segment; it reads SFVLIVVLFILLIIVGATFLY.

It belongs to the SscA family.

It localises to the membrane. The chain is SPbeta prophage-derived membrane protein YosA (yosA) from Bacillus subtilis (strain 168).